We begin with the raw amino-acid sequence, 132 residues long: Peptide methionine sulfoxide reductase MsrB (132 aa).

In terms of domain architecture, MsrB spans 8-130; that stretch reads LDSWREELTE…NSASLKLVPR (123 aa). Positions 47, 50, 96, and 99 each coordinate Zn(2+). The active-site Nucleophile is the Cys-119.

The protein belongs to the MsrB Met sulfoxide reductase family. Zn(2+) is required as a cofactor.

It carries out the reaction L-methionyl-[protein] + [thioredoxin]-disulfide + H2O = L-methionyl-(R)-S-oxide-[protein] + [thioredoxin]-dithiol. The sequence is that of Peptide methionine sulfoxide reductase MsrB from Pseudomonas paraeruginosa (strain DSM 24068 / PA7) (Pseudomonas aeruginosa (strain PA7)).